We begin with the raw amino-acid sequence, 184 residues long: ATP-dependent protease subunit HslV (184 aa).

The active site involves Thr12. The Na(+) site is built by Ala167, Cys170, and Thr173.

Belongs to the peptidase T1B family. HslV subfamily. A double ring-shaped homohexamer of HslV is capped on each side by a ring-shaped HslU homohexamer. The assembly of the HslU/HslV complex is dependent on binding of ATP.

The protein resides in the cytoplasm. The catalysed reaction is ATP-dependent cleavage of peptide bonds with broad specificity.. Its activity is regulated as follows. Allosterically activated by HslU binding. Functionally, protease subunit of a proteasome-like degradation complex believed to be a general protein degrading machinery. This Wolbachia pipientis subsp. Culex pipiens (strain wPip) protein is ATP-dependent protease subunit HslV.